A 543-amino-acid chain; its full sequence is MGPIHNYFGVVCLGIAASVYFRPECALYGSRIATFAVLLTGIAISKLLYQLFIYPQFVTPLKHFPAPPNRHWLTGNTGSLLVDTPHALMKEWAKTIPNDGILRYYIVGNMERLTVTSPAVLREILVSKAYEFAKPLVIQQTLRRVLGNGILIAEGEEHKFQRKNLKPAFAYRHVKDLYSVFWSKGTEMTKLIRKDLQSRKAPDDNTIQVRTWASRSSLDIIGLAGMGRDFGSLQDPENSLSQSYEMIFATPGLGTKILFILGMLLGNTTWLAKLPTKQNRLIDTGCRNIRDATRRMIREQKAKMEDPNAAAEVDIISVAMRSGNFDDDNLIDQLMTFLGAGHETTAGALQWAIYALCKHPDVQSRLREEVRANLPPIHGENPGPIDAATIDSLPYLNAVCNEVIRFHPSVPNTVRVALNDTTLMGHPIPKGTQVVISPELVNHMPALWGPDAERFNPDRWMGPGKANTGGAASNYAFLSFLHGPRSCIGQVFAKAELACLLAAVVGSFAFELKSPDAPLEVREGATIAPKDGVLAKFTPVEGW.

The next 2 membrane-spanning stretches (helical) occupy residues 1 to 21 (MGPI…SVYF) and 32 to 52 (IATF…YQLF). C487 lines the heme pocket.

This sequence belongs to the cytochrome P450 family. Heme is required as a cofactor.

Its subcellular location is the membrane. The catalysed reaction is presphingofungin + 2 reduced [NADPH--hemoprotein reductase] + O2 = sphingofungin B1 + 2 oxidized [NADPH--hemoprotein reductase] + H2O + 2 H(+). It participates in secondary metabolite biosynthesis. Its function is as follows. Cytochrome P450 monooxygenase; part of the gene cluster that mediates the biosynthesis of sphingofungins, bioactive molecules acting as sphingolipid inhibitors via inhibiting serine palmitoyl transferase (SPT). Within the pathway, sphH catalyzes the conversion of presphingofungin into sphingofungin B1 via hydroxylagtion at position C-14. Sphingofungin biosynthesis starts with the PKS sphB that produces an C18 polyketide precursor 3-hydroxyoctadeca-4,10-dienoyl-ACP containing one delta-6 desaturation and one delta-12 desaturation. The aminoacyl transferase sphA uses the sphB product to produce 3-keto-presphingofungin by adding an aminomalonate molecule. SphF then reduces the C-3 ketone of 3-keto-presphingofungin which leads to presphingofungin. The cytochrome P450 monooxygenase sphH converts presphingofungin into sphingofungin B1 which is further converted to sphingofungin B by the dioxygenase sphC. SphC is also able to convert presphingofungin into sphingofungin B2. The acetyltransferase sphE acetylates sphingofungin B to produce sphingofungin C, but can also convert sphingofungin B1 into sphingofungin C1 and sphingofungin B2 into sphingofungin C2. Finally, sphingofungin C can be spontaneously converted into sphingofungin D. The protein is Cytochrome P450 monooxygenase sphH of Aspergillus fumigatus (strain CBS 144.89 / FGSC A1163 / CEA10) (Neosartorya fumigata).